The primary structure comprises 143 residues: Putative pre-16S rRNA nuclease (143 aa).

Belongs to the YqgF nuclease family.

The protein resides in the cytoplasm. Could be a nuclease involved in processing of the 5'-end of pre-16S rRNA. This Marinobacter nauticus (strain ATCC 700491 / DSM 11845 / VT8) (Marinobacter aquaeolei) protein is Putative pre-16S rRNA nuclease.